The sequence spans 139 residues: Transcription antitermination protein NusB (139 aa).

The protein belongs to the NusB family.

Its function is as follows. Involved in transcription antitermination. Required for transcription of ribosomal RNA (rRNA) genes. Binds specifically to the boxA antiterminator sequence of the ribosomal RNA (rrn) operons. The polypeptide is Transcription antitermination protein NusB (Baumannia cicadellinicola subsp. Homalodisca coagulata).